Consider the following 175-residue polypeptide: Large ribosomal subunit protein uL15 (175 aa).

Over residues 1–13 the composition is skewed to basic and acidic residues; it reads MTIKLNELRDNNG. Disordered regions lie at residues 1-44 and 150-175; these read MTIK…KARS and VELP…AKNA. Gly residues predominate over residues 23-37; the sequence is RGIGSGKGKTAGRGQ.

The protein belongs to the universal ribosomal protein uL15 family. In terms of assembly, part of the 50S ribosomal subunit.

In terms of biological role, binds to the 23S rRNA. The protein is Large ribosomal subunit protein uL15 of Sphingopyxis alaskensis (strain DSM 13593 / LMG 18877 / RB2256) (Sphingomonas alaskensis).